A 384-amino-acid polypeptide reads, in one-letter code: Probable endopolygalacturonase C (384 aa).

The N-terminal stretch at 1-19 (MVRQLILISSLLAAVAVRA) is a signal peptide. The propeptide occupies 20-40 (APADPAHPMVTEAPDVNLVEK). An intrachain disulfide couples C45 to C63. PbH1 repeat units lie at residues 176–207 (STDLTMTDITVDNTDGDTDDLAANTDGFDIGE) and 208–229 (STYITITGAEIYNQDDCVAINS). D222 functions as the Proton donor in the catalytic mechanism. C224 and C240 are disulfide-bonded. H244 is a catalytic residue. 2 PbH1 repeats span residues 254–280 (RDDNTVKNVTFYDVNVLKSQQAIRIKT) and 288–310 (VSEVTYHEIAFSDATDYGIVIEQ). N261 carries an N-linked (GlcNAc...) asparagine glycan. Intrachain disulfides connect C349–C354 and C373–C382.

The protein belongs to the glycosyl hydrolase 28 family.

The protein localises to the secreted. It catalyses the reaction (1,4-alpha-D-galacturonosyl)n+m + H2O = (1,4-alpha-D-galacturonosyl)n + (1,4-alpha-D-galacturonosyl)m.. Its function is as follows. Involved in maceration and soft-rotting of plant tissue. Hydrolyzes the 1,4-alpha glycosidic bonds of de-esterified pectate in the smooth region of the plant cell wall. The protein is Probable endopolygalacturonase C (pgaC) of Aspergillus niger (strain ATCC MYA-4892 / CBS 513.88 / FGSC A1513).